The primary structure comprises 73 residues: Large ribosomal subunit protein bL31 (73 aa).

4 residues coordinate Zn(2+): C16, C18, C38, and C41.

This sequence belongs to the bacterial ribosomal protein bL31 family. Type A subfamily. In terms of assembly, part of the 50S ribosomal subunit. Zn(2+) serves as cofactor.

Functionally, binds the 23S rRNA. The protein is Large ribosomal subunit protein bL31 of Vibrio vulnificus (strain CMCP6).